Reading from the N-terminus, the 308-residue chain is Glycine--tRNA ligase alpha subunit (308 aa).

Belongs to the class-II aminoacyl-tRNA synthetase family. In terms of assembly, tetramer of two alpha and two beta subunits.

The protein resides in the cytoplasm. It catalyses the reaction tRNA(Gly) + glycine + ATP = glycyl-tRNA(Gly) + AMP + diphosphate. The chain is Glycine--tRNA ligase alpha subunit from Brevibacillus brevis (strain 47 / JCM 6285 / NBRC 100599).